We begin with the raw amino-acid sequence, 299 residues long: Coenzyme PQQ synthesis protein B (299 aa).

Belongs to the PqqB family.

Its pathway is cofactor biosynthesis; pyrroloquinoline quinone biosynthesis. Its function is as follows. May be involved in the transport of PQQ or its precursor to the periplasm. The sequence is that of Coenzyme PQQ synthesis protein B from Xanthomonas axonopodis pv. citri (strain 306).